A 222-amino-acid polypeptide reads, in one-letter code: Ribosomal RNA small subunit methyltransferase G (222 aa).

Residues Gly-82, Leu-87, 132-133 (AE), and Arg-150 each bind S-adenosyl-L-methionine.

This sequence belongs to the methyltransferase superfamily. RNA methyltransferase RsmG family.

The protein resides in the cytoplasm. Its function is as follows. Specifically methylates the N7 position of guanine in position 518 of 16S rRNA. The chain is Ribosomal RNA small subunit methyltransferase G from Corynebacterium jeikeium (strain K411).